The sequence spans 450 residues: Probable ECA polymerase (450 aa).

11 helical membrane-spanning segments follow: residues 6 to 26 (FSGL…LTWF), 37 to 57 (VFFS…TSVL), 63 to 83 (VGVA…CFYA), 118 to 138 (VILM…NGFL), 155 to 175 (GVAL…VYFL), 181 to 201 (AWLF…MIVG), 207 to 227 (IIIA…ISLW), 228 to 248 (MLAA…LKRY), 341 to 361 (LVVM…GLII), 378 to 398 (YKAA…IVLA), and 410 to 430 (VFFI…YWLF).

Belongs to the WzyE family. As to quaternary structure, probably part of a complex composed of WzxE, WzyE and WzzE.

It localises to the cell inner membrane. It functions in the pathway bacterial outer membrane biogenesis; enterobacterial common antigen biosynthesis. In terms of biological role, probably involved in the polymerization of enterobacterial common antigen (ECA) trisaccharide repeat units. This is Probable ECA polymerase from Escherichia fergusonii (strain ATCC 35469 / DSM 13698 / CCUG 18766 / IAM 14443 / JCM 21226 / LMG 7866 / NBRC 102419 / NCTC 12128 / CDC 0568-73).